We begin with the raw amino-acid sequence, 206 residues long: CASP-like protein 2C1 (206 aa).

The Cytoplasmic portion of the chain corresponds to 1–31 (MSVLGVGPRTVTPHLRKGMMESSSGISLARA). A helical transmembrane segment spans residues 32–52 (EAFLRLFAILVLVLTACLLGF). At 53-71 (DTQTKLLFSTIKKTATFRD) the chain is on the extracellular side. The chain crosses the membrane as a helical span at residues 72–92 (LGALQVVVYVDSVAAGYNLLQ). Residues 93–111 (LGRGFISAKLKGKLINVSY) are Cytoplasmic-facing. A helical transmembrane segment spans residues 112 to 132 (VTLPWVCFLLDQAAVYTVFSA). The Extracellular segment spans residues 133–161 (NTAALQASIIAVTGESSLQWMKVCNRYTR). The helical transmembrane segment at 162–182 (FCIQVGGALLSGYLASLLMVL) threads the bilayer. Topologically, residues 183–206 (LSSLSAFSLFRLYSPKQFHLLKPT) are cytoplasmic.

Belongs to the Casparian strip membrane proteins (CASP) family. As to quaternary structure, homodimer and heterodimers.

It is found in the cell membrane. The chain is CASP-like protein 2C1 from Vitis vinifera (Grape).